A 441-amino-acid chain; its full sequence is Trigger factor (441 aa).

A PPIase FKBP-type domain is found at 161–246 (GDKVTIDFLG…VHEVLGEKLP (86 aa)).

It belongs to the FKBP-type PPIase family. Tig subfamily.

It is found in the cytoplasm. It catalyses the reaction [protein]-peptidylproline (omega=180) = [protein]-peptidylproline (omega=0). Its function is as follows. Involved in protein export. Acts as a chaperone by maintaining the newly synthesized protein in an open conformation. Functions as a peptidyl-prolyl cis-trans isomerase. This is Trigger factor from Teredinibacter turnerae (strain ATCC 39867 / T7901).